A 194-amino-acid polypeptide reads, in one-letter code: Ancillary SecYEG translocon subunit (194 aa).

The Cytoplasmic portion of the chain corresponds to 1-10 (MHLNKMKKVS). The helical transmembrane segment at 11–31 (LKTYLVLFFLIFFIFCSFWFI) threads the bilayer. At 32–194 (KPKEKKLKLE…INMKINEIKR (163 aa)) the chain is on the periplasmic side.

Belongs to the YfgM family. As to quaternary structure, interacts with the SecYEG translocon. Forms a complex with PpiD.

The protein localises to the cell inner membrane. In terms of biological role, may mediate protein transfer from the SecYEG translocon to the periplasmic chaperone network via its periplasmic C-terminal region. The sequence is that of Ancillary SecYEG translocon subunit from Buchnera aphidicola subsp. Schizaphis graminum (strain Sg).